The primary structure comprises 282 residues: Formate channel FocB (282 aa).

At 1–35 (MRNKLSFDLQLSARKAAIAERIAAHKIARSKVSVF) the chain is on the cytoplasmic side. Residues 36 to 56 (LMAMSAGVFMAIGFTFYLSVI) traverse the membrane as a helical segment. The Periplasmic portion of the chain corresponds to 57–68 (ADAPSSQALTHL). Residues 69–89 (VGGLCFTLGFILLAVCGTSLF) traverse the membrane as a helical segment. Residues 90–112 (TSSVMTVMAKSRGVISWRTWLIN) lie on the Cytoplasmic side of the membrane. Residues 113 to 133 (ALLVACGNLAGIACFSLLIWF) form a helical membrane-spanning segment. Topologically, residues 134-163 (SGLVMSENAMWGVAVLHCAEGKMHHTFTES) are periplasmic. The chain crosses the membrane as a helical span at residues 164 to 184 (VSLGIMCNLMVCLALWMSYCG). Residues 185-190 (RSLCDK) lie on the Cytoplasmic side of the membrane. A helical membrane pass occupies residues 191–211 (IVAMILPITLFVASGFEHCIA). Residues 212 to 248 (NLFVIPFAIAIRHFAPPPFWQLAHSSADNFPALTVSH) lie on the Periplasmic side of the membrane. A helical transmembrane segment spans residues 249–269 (FITANLLPVMLGNIIGGAVLV). Residues 270 to 282 (SMCYRAIYLRQEP) lie on the Cytoplasmic side of the membrane.

This sequence belongs to the FNT transporter (TC 1.A.16) family.

It localises to the cell inner membrane. The enzyme catalyses formate(in) = formate(out). The direction of formate translocation depends on external pH and electron donor source. In terms of biological role, involved in the bidirectional transport of formate during mixed-acid fermentation. This Escherichia coli (strain K12) protein is Formate channel FocB.